A 75-amino-acid chain; its full sequence is Small ribosomal subunit protein bS21A (75 aa).

The protein belongs to the bacterial ribosomal protein bS21 family.

This chain is Small ribosomal subunit protein bS21A (rpsU1), found in Agrobacterium fabrum (strain C58 / ATCC 33970) (Agrobacterium tumefaciens (strain C58)).